The following is a 137-amino-acid chain: MGAHLARRYLGDASVEPDPLRMPTFPPDYGFPERKEREMVATQQEMNDAQLVLQQRDYCAHYLIRFLKCKRDSFPNFLACKHERHDWDYCEHLDYVKRMKEFERERRLLQRKKRREQREADMAKGLGPGEVAPEVAL.

Residue glycine 2 is the site of N-myristoyl glycine attachment. Residues 56–98 (RDYCAHYLIRFLKCKRDSFPNFLACKHERHDWDYCEHLDYVKR) enclose the CHCH domain. The Cx9C motif 1 signature appears at 59-69 (CAHYLIRFLKC). 2 disulfide bridges follow: cysteine 59-cysteine 90 and cysteine 69-cysteine 80. Serine 73 carries the phosphoserine modification. A Cx9C motif 2 motif is present at residues 80–90 (CKHERHDWDYC). Residues 110 to 137 (QRKKRREQREADMAKGLGPGEVAPEVAL) form a disordered region.

The protein belongs to the complex I NDUFB7 subunit family. Complex I is composed of 45 different subunits.

The protein localises to the mitochondrion inner membrane. The protein resides in the mitochondrion intermembrane space. Accessory subunit of the mitochondrial membrane respiratory chain NADH dehydrogenase (Complex I), that is believed not to be involved in catalysis. Complex I functions in the transfer of electrons from NADH to the respiratory chain. The immediate electron acceptor for the enzyme is believed to be ubiquinone. This chain is NADH dehydrogenase [ubiquinone] 1 beta subcomplex subunit 7 (NDUFB7), found in Bos taurus (Bovine).